The chain runs to 60 residues: Ribosome modulation factor (60 aa).

The protein belongs to the ribosome modulation factor family.

It localises to the cytoplasm. During stationary phase, converts 70S ribosomes to an inactive dimeric form (100S ribosomes). This is Ribosome modulation factor from Kangiella koreensis (strain DSM 16069 / JCM 12317 / KCTC 12182 / SW-125).